The following is a 714-amino-acid chain: MSDLVYQWLESANLQQYYPAFEQQGITPQRFITITIQDYGALGIQALPDKQKLFRLITTLKSRENILEQQPSAPNTGATPQSVPSSHVSPHVAQGDRFVGDKQKQNDIQQAQDMSLYESYDGGYEPPYVSAQGSGPANGDDYVIPTIPYHPNAPNPPNPRGIPTVNRTVVPPVDLFLNQIQSRIRVVIRKRPINPKELSQNQRDVVTADGWNQVSIHEPKVKVDLTKYTDLHTFKFDHVFNEQSDNQEIYQYAAKPLIRSVFEGKNCTVFAYGQTGSGKSFTMMHKDNGIYVLACFDILEYLRVYNGSQGNNSKFLVPVVSFFEIYGGKLFDLLNNRQRLQALEDGKGNVQITGLTEKQISSVDAMLNLIDSGLTLRAVGATGANADSSRSHAILQIALKYTKSGKEYSRISFIDLAGSERASDVQNSDRQTRMEGAEINKSLLALKECIRAMDKSNDSKSGAHIPFRGSKLTMVLRDSFIGNSQTVMIANISPNDKSCDNTLNTLRYADRVKELQHGKGGIIKFNVLKMGQNAADVILGTARDDENDVYKAGIVGVNAAPSQQARVPPASQAPITARQIQQNLPQPHYNPNYNPPNSKPAFEPRVETTDEDDMVRTHCDLVDSIYEQEDLIVRAHRRQVDSMMQLVKEEVALLHAIENDQVSIDDWLVKLSDILSRKEEAITTLKGNLSAFKQALQKEEELSHSIDLNKARKK.

The SAM domain maps to 1–63; it reads MSDLVYQWLE…FRLITTLKSR (63 aa). Residues 69–81 show a composition bias toward polar residues; it reads QQPSAPNTGATPQ. 2 disordered regions span residues 69–109 and 122–161; these read QQPS…NDIQ and GGYE…NPRG. Residues 82 to 92 show a composition bias toward low complexity; that stretch reads SVPSSHVSPHV. Over residues 151-160 the composition is skewed to pro residues; the sequence is PNAPNPPNPR. The 333-residue stretch at 183–515 folds into the Kinesin motor domain; the sequence is RIRVVIRKRP…LRYADRVKEL (333 aa). 273 to 280 contributes to the ATP binding site; it reads GQTGSGKS.

The protein belongs to the TRAFAC class myosin-kinesin ATPase superfamily. Kinesin family. KIN-13 subfamily. Interacts with PLK. Phosphorylated by PLK.

Its subcellular location is the cytoplasm. It localises to the cytoskeleton. It is found in the cell projection. The protein resides in the cilium. The protein localises to the flagellum. Its subcellular location is the flagellum basal body. It localises to the flagellum axoneme. It is found in the spindle. The protein resides in the chromosome. The protein localises to the centromere. Its subcellular location is the kinetochore. In terms of biological role, involved in cell cycle. Involved in formation of flagella, regulation of flagellar length, and formation of median bodies during interphase. Regulates flagellar length in all eight distal flagellar tips by promoting disassembly of the microtubules. Disassembles microtubules at the distal flagellar tips in a length-dependent manner in order to maintain different equilibrium lengths of the four flagellar pairs. Regulates interphase and mitotic microtubule dynamics. Regulates microtubule disassembly dynamics of the dual mitotic spindles and the median body. This Giardia intestinalis (strain ATCC 50803 / WB clone C6) (Giardia lamblia) protein is Kinesin-like protein KIN-13.